A 309-amino-acid chain; its full sequence is UDP-N-acetylenolpyruvoylglucosamine reductase (309 aa).

Residues 24–187 (RVGGPADWLF…TKAVFEAPRG (164 aa)) enclose the FAD-binding PCMH-type domain. R167 is an active-site residue. The segment covering 200–213 (LARRDATQPTKERS) has biased composition (basic and acidic residues). The disordered stretch occupies residues 200-230 (LARRDATQPTKERSAGSTFRNPAGFSSTGRS). Residues 214 to 228 (AGSTFRNPAGFSSTG) show a composition bias toward polar residues. The active-site Proton donor is the S216. The active site involves E298.

Belongs to the MurB family. FAD serves as cofactor.

The protein localises to the cytoplasm. The catalysed reaction is UDP-N-acetyl-alpha-D-muramate + NADP(+) = UDP-N-acetyl-3-O-(1-carboxyvinyl)-alpha-D-glucosamine + NADPH + H(+). The protein operates within cell wall biogenesis; peptidoglycan biosynthesis. In terms of biological role, cell wall formation. This chain is UDP-N-acetylenolpyruvoylglucosamine reductase, found in Roseobacter denitrificans (strain ATCC 33942 / OCh 114) (Erythrobacter sp. (strain OCh 114)).